The following is a 426-amino-acid chain: Glutamate-1-semialdehyde 2,1-aminomutase (426 aa).

Lys265 bears the N6-(pyridoxal phosphate)lysine mark.

This sequence belongs to the class-III pyridoxal-phosphate-dependent aminotransferase family. HemL subfamily. As to quaternary structure, homodimer. The cofactor is pyridoxal 5'-phosphate.

It localises to the cytoplasm. The enzyme catalyses (S)-4-amino-5-oxopentanoate = 5-aminolevulinate. The protein operates within porphyrin-containing compound metabolism; protoporphyrin-IX biosynthesis; 5-aminolevulinate from L-glutamyl-tRNA(Glu): step 2/2. This is Glutamate-1-semialdehyde 2,1-aminomutase from Escherichia coli O127:H6 (strain E2348/69 / EPEC).